The chain runs to 462 residues: Fumarate hydratase class II (462 aa).

Substrate contacts are provided by residues 97–99, 128–131, 138–140, and threonine 186; these read SGT, HPND, and STN. Catalysis depends on histidine 187, which acts as the Proton donor/acceptor. Residue serine 317 is part of the active site. Substrate-binding positions include serine 318 and 323–325; that span reads KVN.

Belongs to the class-II fumarase/aspartase family. Fumarase subfamily. In terms of assembly, homotetramer.

Its subcellular location is the cytoplasm. It catalyses the reaction (S)-malate = fumarate + H2O. It participates in carbohydrate metabolism; tricarboxylic acid cycle; (S)-malate from fumarate: step 1/1. Involved in the TCA cycle. Catalyzes the stereospecific interconversion of fumarate to L-malate. This chain is Fumarate hydratase class II, found in Neisseria meningitidis serogroup A / serotype 4A (strain DSM 15465 / Z2491).